The sequence spans 214 residues: ATP phosphoribosyltransferase (214 aa).

Belongs to the ATP phosphoribosyltransferase family. Short subfamily. As to quaternary structure, heteromultimer composed of HisG and HisZ subunits.

It localises to the cytoplasm. The enzyme catalyses 1-(5-phospho-beta-D-ribosyl)-ATP + diphosphate = 5-phospho-alpha-D-ribose 1-diphosphate + ATP. It functions in the pathway amino-acid biosynthesis; L-histidine biosynthesis; L-histidine from 5-phospho-alpha-D-ribose 1-diphosphate: step 1/9. Its function is as follows. Catalyzes the condensation of ATP and 5-phosphoribose 1-diphosphate to form N'-(5'-phosphoribosyl)-ATP (PR-ATP). Has a crucial role in the pathway because the rate of histidine biosynthesis seems to be controlled primarily by regulation of HisG enzymatic activity. The polypeptide is ATP phosphoribosyltransferase (Marinobacter nauticus (strain ATCC 700491 / DSM 11845 / VT8) (Marinobacter aquaeolei)).